Consider the following 177-residue polypeptide: Co-chaperone protein HscB homolog (177 aa).

In terms of domain architecture, J spans aspartate 8 to leucine 80.

Belongs to the HscB family. Interacts with HscA and stimulates its ATPase activity.

Its function is as follows. Co-chaperone involved in the maturation of iron-sulfur cluster-containing proteins. Seems to help targeting proteins to be folded toward HscA. This chain is Co-chaperone protein HscB homolog, found in Aromatoleum aromaticum (strain DSM 19018 / LMG 30748 / EbN1) (Azoarcus sp. (strain EbN1)).